The primary structure comprises 84 residues: Small ribosomal subunit protein uS17 (84 aa).

Belongs to the universal ribosomal protein uS17 family. As to quaternary structure, part of the 30S ribosomal subunit.

In terms of biological role, one of the primary rRNA binding proteins, it binds specifically to the 5'-end of 16S ribosomal RNA. The protein is Small ribosomal subunit protein uS17 of Borrelia garinii subsp. bavariensis (strain ATCC BAA-2496 / DSM 23469 / PBi) (Borreliella bavariensis).